A 98-amino-acid polypeptide reads, in one-letter code: NADH-ubiquinone oxidoreductase chain 4L (98 aa).

3 consecutive transmembrane segments (helical) span residues 1 to 21, 26 to 46, and 58 to 78; these read MSPM…GLAF, LLSA…ATAT, and ILPM…LAIL.

This sequence belongs to the complex I subunit 4L family.

Its subcellular location is the mitochondrion membrane. It catalyses the reaction a ubiquinone + NADH + 5 H(+)(in) = a ubiquinol + NAD(+) + 4 H(+)(out). Its function is as follows. Core subunit of the mitochondrial membrane respiratory chain NADH dehydrogenase (Complex I) which catalyzes electron transfer from NADH through the respiratory chain, using ubiquinone as an electron acceptor. Part of the enzyme membrane arm which is embedded in the lipid bilayer and involved in proton translocation. This chain is NADH-ubiquinone oxidoreductase chain 4L (MT-ND4L), found in Scyliorhinus canicula (Small-spotted catshark).